A 101-amino-acid polypeptide reads, in one-letter code: Small ribosomal subunit protein uS14 (101 aa).

This sequence belongs to the universal ribosomal protein uS14 family. As to quaternary structure, part of the 30S ribosomal subunit. Contacts proteins S3 and S10.

In terms of biological role, binds 16S rRNA, required for the assembly of 30S particles and may also be responsible for determining the conformation of the 16S rRNA at the A site. The sequence is that of Small ribosomal subunit protein uS14 from Polynucleobacter asymbioticus (strain DSM 18221 / CIP 109841 / QLW-P1DMWA-1) (Polynucleobacter necessarius subsp. asymbioticus).